Here is a 1261-residue protein sequence, read N- to C-terminus: Myosin-1 (1261 aa).

Positions Met-1–Ala-39 are disordered. Positions Ile-49–Asp-728 constitute a Myosin motor domain. An ATP-binding site is contributed by Gly-142–Thr-149. Phosphoserine is present on Ser-370. The tract at residues Ser-417–Ala-499 is actin-binding. IQ domains lie at His-732–Cys-752 and Ala-753–Gln-778. Residues Arg-786–Gly-973 form the TH1 domain. Disordered stretches follow at residues Ala-956–Tyr-1093 and Tyr-1139–Trp-1261. Pro residues-rich tracts occupy residues Arg-1019–Gln-1029, Ile-1038–Gln-1052, Ala-1072–Pro-1084, and Thr-1147–Ala-1159. One can recognise an SH3 domain in the interval Pro-1084–Ala-1145. A compositionally biased stretch (low complexity) spans Pro-1160–Lys-1181. Over residues Val-1212–Asn-1233 the composition is skewed to polar residues. Positions Ala-1234 to Ala-1243 are enriched in low complexity.

It belongs to the TRAFAC class myosin-kinesin ATPase superfamily. Myosin family. Phosphorylation of the TEDS site (Ser-370) is required for the polarization of the actin cytoskeleton. Phosphorylation probably activates the myosin-I ATPase activity.

It is found in the cytoplasm. Its subcellular location is the cytoskeleton. It localises to the actin patch. Its function is as follows. Type-I myosin implicated in the organization of the actin cytoskeleton. Required for proper actin cytoskeleton polarization. At the cell cortex, assembles in patch-like structures together with proteins from the actin-polymerizing machinery and promotes actin assembly. Functions as actin nucleation-promoting factor (NPF) for the Arp2/3 complex. Plays an important role in polarized growth, spore germination, hyphal morphogenesis, and septal wall formation. The sequence is that of Myosin-1 (myoA) from Aspergillus oryzae (strain ATCC 42149 / RIB 40) (Yellow koji mold).